A 104-amino-acid chain; its full sequence is Large ribosomal subunit protein uL24 (104 aa).

It belongs to the universal ribosomal protein uL24 family. In terms of assembly, part of the 50S ribosomal subunit.

Functionally, one of two assembly initiator proteins, it binds directly to the 5'-end of the 23S rRNA, where it nucleates assembly of the 50S subunit. Its function is as follows. One of the proteins that surrounds the polypeptide exit tunnel on the outside of the subunit. The polypeptide is Large ribosomal subunit protein uL24 (Corynebacterium jeikeium (strain K411)).